We begin with the raw amino-acid sequence, 374 residues long: DNA-directed RNA polymerase subunit alpha (374 aa).

The tract at residues 1–270 (MIFDEDSSSV…DQFQQFINFD (270 aa)) is alpha N-terminal domain (alpha-NTD). The alpha C-terminal domain (alpha-CTD) stretch occupies residues 282–374 (KDVLPYDSNL…ESLSKQYSEE (93 aa)).

It belongs to the RNA polymerase alpha chain family. In terms of assembly, homodimer. The RNAP catalytic core consists of 2 alpha, 1 beta, 1 beta' and 1 omega subunit. When a sigma factor is associated with the core the holoenzyme is formed, which can initiate transcription.

It carries out the reaction RNA(n) + a ribonucleoside 5'-triphosphate = RNA(n+1) + diphosphate. DNA-dependent RNA polymerase catalyzes the transcription of DNA into RNA using the four ribonucleoside triphosphates as substrates. In Ehrlichia ruminantium (strain Welgevonden), this protein is DNA-directed RNA polymerase subunit alpha.